Here is a 316-residue protein sequence, read N- to C-terminus: 4-diphosphocytidyl-2-C-methyl-D-erythritol kinase (316 aa).

The active site involves lysine 32. 126–136 (PVGAGLGGGSA) contributes to the ATP binding site. Residue aspartate 168 is part of the active site.

The protein belongs to the GHMP kinase family. IspE subfamily.

The catalysed reaction is 4-CDP-2-C-methyl-D-erythritol + ATP = 4-CDP-2-C-methyl-D-erythritol 2-phosphate + ADP + H(+). It functions in the pathway isoprenoid biosynthesis; isopentenyl diphosphate biosynthesis via DXP pathway; isopentenyl diphosphate from 1-deoxy-D-xylulose 5-phosphate: step 3/6. Functionally, catalyzes the phosphorylation of the position 2 hydroxy group of 4-diphosphocytidyl-2C-methyl-D-erythritol. This chain is 4-diphosphocytidyl-2-C-methyl-D-erythritol kinase, found in Bifidobacterium longum (strain DJO10A).